A 4743-amino-acid chain; its full sequence is MGPQRPALRAPLLLLFLLLFLDTSVWAQDATRFKHLRKYVYSYEAESSSGVRGTADSRSATKINCKVELEVPQVCTLIMRTSQCTLKEVYGFNPEGKALMKKTKNSEEFASAMSRYELKLAFPEGKRVALYPDLGEPNYILNIKRGIISALLVPPETEEDKQVLFQDTVYGNCSTQVTVNSRKGTVATEMSTERNLQHCDGFQPISTSVSPLALIKGLVRPLSTLISSSQSCQYTLEPKRKHVSEAICNEQHLFLPFSYKNKYGIMTHVTQKLSLEDTPKINSRFFRGGINQVGLAFESTKSTSPPKQADAVLKTLQELKKLSISEQNAQRANLFHKLVTELRGLSGEAITSLLPQLIEVSSPITLQALIQCGQPECYTHILQWLKTEKAHPLLIDIVTYLMALIPNPSVQRLQEIFNTAKELQSRATLYALSHAVNSYYAIMDHSRSPVLEDIAGYLMKQIDNECMGDEDRTFLILRVIGNMGRTMERVMPALKSSVLNCVRSTKPSLQIQKAALQALRKMEMGDEVRTILFDTFVNDVAPVEKRLAAYLLLMRSPSSSDINKIAKLLQWEQSEQVKNFVASHIANILNSEELYVQDLKNLIKNALVNSRLPTIMDFRKFSRNYQISKSVSIPLFDPVSAKIEGNLVFDPSSYLPKESMLKTTLTVFGIASLDLFEIGLEGKGFEPTLEALFGKQGFFPDSVNKALYWVNGQVPDRVSKVLVDHFGYTKDDKHEQDMVNGIMPIVDKLIKELKSKEIPEARAYLRILGKELGFVRLQDLQVLGKLLLNGAQTFRGVPQMIVQAIREGSKDDLFLHYIFMENAFELPTGVGLQLQVSSSGVFTPGIKAGVRLELANIQAELVAKPSVSLEFVTNMGIIIPDFAKSGVQMNTNFFHESGLEARVALKAGQLKVIIPSPKRPVKLFSGSNTLHLVSTTKTEVIPPLIENRKSWSTCKPFFTGMNYCTTGAYSNASSTESASYYPLTGDTRYELELKPTGEVEQYSASATYELLKEDKSLVDTLKFLVQAEGVQQSEATAMFKYNRRSRTLSSEVLIPGFDVNFGTILRVNDESSKDKNTYKLILDIQNKKITEVSVVGHVSYDKKGDGKVKGVVSIPRLQAEARSEVHTHWSPTKLLFQMDSSATAYGSTISKRVAWRYDNEKIEFDWNTGTNVDTKKVASNFPVDLSRYPRMVHEYANGLLDHRVPQTDMTFRHMGSKLIVDHLNGLSELNLPKVGLPDFHIPDNLFLKTDGRVKYTLNKNRIEIDIPLPLGGKSSKDLKVPESVRTPALNFKSVGFHLPSQEVQIPTFTIPKTHQLQVPLLGILDLSTNVYSNLYNWSVSYTGGNTSRDHFSLQAQYRMKADSVVDLFSYSVQGSGETTYDSKSTFTLSCDGSLHHKFLDSKFKVSHVEKFGNNPVSKGLLTFETSSALGPQMSATVQLDSKKKQHLYVKDIKVDGQFRVFSLYAQGEYGLSYERDSMTGQMSGESNMKFNSTYFQGTNQIVGMYQDGMLSVTSTSDLQDGIFKNTASLKYENYELTLKSDSSGQYENFAASNKLDMTFSKQSALLRSEHQANYKSLRLVTLLSGSLTSQGVELNADILGTDKINTGAHKSTLKIAQDGVSTSATTNLKYSPLLLENELNAELGLSGASMKLSTSGRFKEHHAKFSLDGRAALTEVSLGSIYQAMILGADSKNVFNFKLSREGLKLSNDMMGSYAEMKLDHTHSLRISGLSLDFFSKMDNIYSGDKFYKQNFNLQLQPYSFGITLSNDLKYDALVLTNNGRLRLEPLKLNVGGNFKGTYQNNELKHIYTISYTDLVVASYRADTVATVQGVEFSHRLNADIEGLASSVDVTTSYSSDPLHFNNVFRFVLAPFTLGVDTHTSGDGKMSLWGEHTGQMYSKFLLKAEPLALTFSHDYKGSTSHNLLYKNSVSTALEHTLSALLTPAEQTSSWKFKTSLNDKVYSQEFEAYNTKDKIGIELSGRADLSGLYSPIKVPFFYSEPVNVLNSLEINDAFDEPREFTIDAVVKYDKNQDVHTISLPFFQSLPDYLERNRRGIISLLEAMKGELQRLSVDQFVRKYRVALSRLPQQIHDYLNASDWERQVAGAKEKLTSFMENYRITDNDVLIALDSAKINLNEKLSQLETYAIQFDQYIRDNYDAQDLKRTIAQIIDRIIEKLKMLDEQYHIRVNLAKSIHNLYLFVENVDLNQISSSGASWIQNVDTKYQIRIQIQEKLQHLRTQIHNIDIQQLAAELKQQIEALDVPMHLDQLRTAILFQRISVIIERVKYFVMNLIEDFKVTEKINTFRVIVRELIEKYEVDRQIQVLMDKSIELAHRYSLSEPLQKLSNVLQQIEIKDYYDKLVGFIDDTVEWIKAVSFKNIIEELNRLIDMSVKKLKAFDYHQFVDKTNSKIREMTQRINAEIQALELPQKTEALKLWVEDFKTTVSNSLEKLKDTKVTVVVDWLQDGLAQIKAQFQDALEDVRDRIYQMDIQGELERCLSLVSQVYSTVVTYISDWWTLTAKNITDFAEQYSTQKWAESVKALVEQGFIVPEIQTFLGTMPAFEVSLHALQEANFQTPDFIVPLTDLRIPSIWINFKMLKNVKIPLRFSTPEFTLLNTFRVRSFTIDLLEIKAKIIRTIDQMLSSELQWPLPEVYLRDLEMVNISLARLSLPDFHVPEITIPEFTIPNVNLKDLQVPDLHIPEFQLPHLSCTTEIPAFGKLHSVLKIQSPLFILDASANIQNITTSENKAEIVASVTARGESKFEALNFDFQAQAQFLELNANPLVLKESVNFSSKHVRMEHEGKILVSGKALEGKSDTVARLHTEKNTVEFNNGIVVKINNQFTLDSQTKYFHKLSVPRLDFSSKASLNNEIKTLLEAGHMAWTSSGTGSWNWACPNFSDEGIHSSKISFIVDGPIASFGLSNNINGKHLRVVQKLTSESGFLNYSRFEVESKVESQHVGSSILTAEGRALLGDAKAEMTGEHNANLNGKVIGTLKNSLFFSAQPFEITASTNNEGNLKVSFPLKLTGKIDFLNNYALFLSPHAQQASWQLSTRFNQYKYNQNFSAINNEHNMEASIVMNGDANLDFLNIPLTIPEINLPYTRFTTPLLKDFSIWEETGLKEFLKTTKQSFDLSIKAQYKKNRDKHSVVIPLKMFYEFMLNNVNSWDRKFEKVRDNALHFLTASYNETKIKFDKYKTENSLNQPSRTFQNRGHTIPVLNIEVSPFAVETLASSHVIPKAIRTPSVTIPGPNIIVPSYRLVLPSLQLPVFHIPRTLFKFSLPDFKKLSTIDNIYIPAMGNFTYDFSFKSSVITLNTNAGLYNQSDLVARFLSSSSFVTDALQYKLEGTSRLMRKKVLKLATAVSLTNKFLKGSHDSTISLTKKNMEASVKTTANLHAPIFTMNFKQELNGNTKSKPTVSSSIELNYDFNSSKLHSAAKGGVDHKFSLESLTSYLSIESFTKGNIKGSFLSQEYSGSVANEANVYLNSKGTRSSVRLQGASNFAGIWNFEVGENFAGEATLRRIYGTWEHNMINHLQVFSYFDTKGKQTCRATLELSPWTMSTLLQVHVSQPSPLFDLHHFDQEVILKASTKNQKVSWKSEVQVESQVLQHNAHFSNDQEEVRLDIAGSLEGQLWDLENFFLPAFGKSLRELLQIDGKRQYLQASTSLHYTKNPNGYLLSLPVQELTDRFIIPGLKLNDFSGIKIYKKLSTSPFALNLTMLPKVKFPGVDLLTQYSKPEGSSVPTFETTIPEIQLTVSQFTLPKSFPVGNTVFDLNKLTNLIADVDLPSITLPEQTIEIPSLEFSVPAGIFIPFFGELTAHVGMASPLYNVTWSTGWKNKADHVETFLDSTCSSTLQFLEYALKVVGTHRIENDKFIYKIKGTLQHCDFNVKYNEDGIFEGLWDLEGEAHLDITSPALTDFHLHYKEDKTSVSASAASPAIGTVSLDASTDDQSVRLNVYFRPQSPPDNKLSIFKMEWRDKESDGETYIKINWEEEAAFRLLDSLKSNVPKASEAVYDYVKKYHLGHASSELRKSLQNDAEHAIRMVDEMNVNAQRVTRDTYQSLYKKMLAQESQSIPEKLKKMVLGSLVRITQKYHMAVTWLMDSVIHFLKFNRVQFPGNAGTYTVDELYTIAMRETKKLLSQLFNGLGHLFSYVQDQVEKSRVINDITFKCPFSPTPCKLKDVLLIFREDLNILSNLGQQDINFTTILSDFQSFLERLLDIIEEKIECLKNNESTCVPDHINMFFKTHIPFAFKSLRENIYSVFSEFNDFVQSILQEGSYKLQQVHQYMKAFREEYFDPSVVGWTVKYYEIEEKMVDLIKTLLAPLRDFYSEYSVTAADFASKMSTQVEQFVSRDIREYLSMLADINGKGREKVAELSIVVKERIKSWSTAVAEITSDYLRQLHSKLQDFSDQLSGYYEKFVAESTRLIDLSIQNYHMFLRYIAELLKKLQVATANNGLLKRGDFEAAVKLGIACLYNEGLSVSDEAYAEVNGLKASRFFSMDERLNMGSDPFIWLSICPPCFRKLRDFAGKGCWEAQPALAKDCAGGSQLGLEGKAFSESVCQLFQASQAVNKQQIFSVQKGLSDTVRYILIGWLVEVAPMKDFTSLCLHLTVECVGRYLQRKLVPRYKLQLLGIACMVICTWFISKEILTIREAVRLTDNTYKYKDLVRVKREIISALEGKIRIPTVVDYKEVLLTLVPVTPRTQYLCSFLCELTLSVYTPAHLASAALLLARLMHGQTQP.

The signal sequence occupies residues 1 to 27; the sequence is MGPQRPALRAPLLLLFLLLFLDTSVWA. A heparin-binding region spans residues 29 to 113; sequence DATRFKHLRK…KNSEEFASAM (85 aa). In terms of domain architecture, Vitellogenin spans 33-660; the sequence is FKHLRKYVYS…PSSYLPKESM (628 aa). C65 and C84 are disulfide-bonded. Residue N172 is glycosylated (N-linked (GlcNAc...) asparagine). Disulfide bonds link C173-C199, C232-C248, C372-C377, and C466-C501. The tract at residues 219 to 293 is heparin-binding; the sequence is VRPLSTLISS…RFFRGGINQV (75 aa). The segment at 890–947 is heparin-binding; the sequence is NTNFFHESGLEARVALKAGQLKVIIPSPKRPVKLFSGSNTLHLVSTTKTEVIPPLIEN. The cysteines at positions 954 and 964 are disulfide-linked. N-linked (GlcNAc...) asparagine glycans are attached at residues N971, N1336, N1345, and N1491. At K1973 the chain carries N6-acetyllysine. Phosphoserine is present on S2006. Residues 2010-2145 are heparin-binding; it reads NDAFDEPREF…EKLSQLETYA (136 aa). N-linked (GlcNAc...) asparagine glycans are attached at residues N2094, N2522, N2662, N2741, N2791, N2897, N2944, and N3063. Residues 3123 to 3198 are heparin-binding; the sequence is FLKTTKQSFD…KIKFDKYKTE (76 aa). The tract at residues 3136–3146 is basic (possible receptor binding region); the sequence is KAQYKKNRDKH. N3186, N3299, and N3321 each carry an N-linked (GlcNAc...) asparagine glycan. Residues 3336–3356 form an LDL receptor binding region; it reads VTDALQYKLEGTSRLMRKKVL. The tract at residues 3346–3479 is heparin-binding; sequence GTSRLMRKKV…QEYSGSVANE (134 aa). A basic (possible receptor binding region) region spans residues 3349-3357; it reads RLMRKKVLK. N3428, N3715, and N3828 each carry an N-linked (GlcNAc...) asparagine glycan. S3981 carries the post-translational modification Phosphoserine. At T3985 the chain carries Phosphothreonine. N-linked (GlcNAc...) asparagine glycosylation is found at N4203 and N4232.

As to quaternary structure, interacts with PCSK9. Interacts with MTTP. Interacts with AUP1. Interacts with CIDEB. In terms of processing, palmitoylated; structural requirement for proper assembly of the hydrophobic core of the lipoprotein particle. As to expression, detected in intestine and liver (at protein level).

Its subcellular location is the cytoplasm. It is found in the secreted. It localises to the lipid droplet. Its function is as follows. Apolipoprotein B is a major protein constituent of chylomicrons (apo B-48), LDL (apo B-100) and VLDL (apo B-100). Apo B-100 functions as a recognition signal for the cellular binding and internalization of LDL particles by the apoB/E receptor. The polypeptide is Apolipoprotein B-100 (Apob) (Rattus norvegicus (Rat)).